The primary structure comprises 721 residues: uncharacterized protein (721 aa).

A helical transmembrane segment spans residues 6 to 26 (QLIFVNFYVILIIWWFVMGIL). An ATP-binding site is contributed by 308–315 (GGTGSGKT).

Belongs to the GSP E family. In terms of processing, this protein undergoes a protein self splicing that involves a post-translational excision of the intervening region (intein) followed by peptide ligation.

Its subcellular location is the membrane. This is an uncharacterized protein from Methanocaldococcus jannaschii (strain ATCC 43067 / DSM 2661 / JAL-1 / JCM 10045 / NBRC 100440) (Methanococcus jannaschii).